Consider the following 411-residue polypeptide: E3 ubiquitin-protein ligase PUB23 (411 aa).

The 76-residue stretch at 11-86 (EIPPFFLCPI…QSWCTLNASY (76 aa)) folds into the U-box domain. ARM repeat units follow at residues 132 to 173 (ATNK…HLET), 175 to 203 (ETVL…RGMY), 221 to 261 (DPMQ…NICP), and 263 to 306 (GRNR…LLCQ).

In terms of assembly, interacts with RPN12A. Auto-ubiquitinated.

It is found in the cytoplasm. It carries out the reaction S-ubiquitinyl-[E2 ubiquitin-conjugating enzyme]-L-cysteine + [acceptor protein]-L-lysine = [E2 ubiquitin-conjugating enzyme]-L-cysteine + N(6)-ubiquitinyl-[acceptor protein]-L-lysine.. The protein operates within protein modification; protein ubiquitination. E3 ubiquitin-protein ligase that negatively regulates water stress response. May control in coordination with PUB23 a drought signaling pathway by ubiquitinating cytosolic RPN12a. Acts as a negative regulator of the immunity triggered by the pathogen-associated molecular patterns (PAMPs), in association with PUB22 and PUB24. The chain is E3 ubiquitin-protein ligase PUB23 (PUB23) from Arabidopsis thaliana (Mouse-ear cress).